The following is a 305-amino-acid chain: tRNA pseudouridine synthase B (305 aa).

Residue D41 is the Nucleophile of the active site.

It belongs to the pseudouridine synthase TruB family. Type 1 subfamily.

The catalysed reaction is uridine(55) in tRNA = pseudouridine(55) in tRNA. Its function is as follows. Responsible for synthesis of pseudouridine from uracil-55 in the psi GC loop of transfer RNAs. The sequence is that of tRNA pseudouridine synthase B from Prochlorococcus marinus (strain MIT 9301).